A 658-amino-acid polypeptide reads, in one-letter code: Probable transketolase (658 aa).

Substrate is bound at residue H24. Thiamine diphosphate contacts are provided by residues H64 and 113-115 (GPL). Position 154 (D154) interacts with Mg(2+). The thiamine diphosphate site is built by G155 and N184. The Mg(2+) site is built by N184 and I186. Substrate is bound by residues H259, R354, and S381. H259 is a thiamine diphosphate binding site. The active-site Proton donor is E408. Thiamine diphosphate is bound at residue F434. The substrate site is built by H458, D466, and R517.

This sequence belongs to the transketolase family. In terms of assembly, homodimer. Requires Mg(2+) as cofactor. Ca(2+) is required as a cofactor. The cofactor is Mn(2+). Co(2+) serves as cofactor. It depends on thiamine diphosphate as a cofactor.

It carries out the reaction D-sedoheptulose 7-phosphate + D-glyceraldehyde 3-phosphate = aldehydo-D-ribose 5-phosphate + D-xylulose 5-phosphate. In terms of biological role, necessary for high-efficiency recombination chromosomal DNA during genetic transformation. Catalyzes the transfer of a two-carbon ketol group from a ketose donor to an aldose acceptor, via a covalent intermediate with the cofactor thiamine pyrophosphate. The sequence is that of Probable transketolase (tkt) from Streptococcus pneumoniae serotype 4 (strain ATCC BAA-334 / TIGR4).